The following is a 248-amino-acid chain: Granzyme-like protein 1 (248 aa).

Residues 1 to 18 (MNLLLLLLTVSLAPTTEA) form the signal peptide. Residues 19–20 (AE) constitute a propeptide, activation peptide. The 226-residue stretch at 21–246 (IIGGHEADPH…FLSWIEETMK (226 aa)) folds into the Peptidase S1 domain. C50 and C66 form a disulfide bridge. H65 functions as the Charge relay system in the catalytic mechanism. N-linked (GlcNAc...) asparagine glycosylation is present at N72. The Charge relay system role is filled by D109. Disulfide bonds link C143/C210 and C174/C189. S204 (charge relay system) is an active-site residue.

Belongs to the peptidase S1 family. Granzyme subfamily. In terms of tissue distribution, duodenum.

Functionally, this enzyme is necessary for target cell lysis in cell-mediated immune responses. The chain is Granzyme-like protein 1 from Rattus norvegicus (Rat).